Reading from the N-terminus, the 327-residue chain is Aldo-keto reductase family 1 member A1 (327 aa).

NADP(+) contacts are provided by residues 13–22, T23, W24, and D47; that span reads GQKIPLIGLG. Y52 (proton donor) is an active-site residue. Residues S164, N165, S213, L215, S217, K265, S266, V267, T268, R271, Q274, and N275 each coordinate NADP(+).

This sequence belongs to the aldo/keto reductase family.

It localises to the cytoplasm. Its subcellular location is the cytosol. The protein resides in the apical cell membrane. It catalyses the reaction a primary alcohol + NADP(+) = an aldehyde + NADPH + H(+). The enzyme catalyses S-nitroso-CoA + NADPH + H(+) = sulfinamide-CoA + NADP(+). The catalysed reaction is S-nitrosoglutathione + NADPH + H(+) = S-(hydroxysulfenamide)glutathione + NADP(+). In terms of biological role, catalyzes the NADPH-dependent reduction of a wide variety of carbonyl-containing compounds to their corresponding alcohols. Displays enzymatic activity towards endogenous metabolites such as aromatic and aliphatic aldehydes, ketones, monosaccharides and bile acids. Acts as an aldehyde-detoxification enzyme. Also acts as an inhibitor of protein S-nitrosylation by mediating degradation of S-nitroso-coenzyme A (S-nitroso-CoA), a cofactor required to S-nitrosylate proteins. Also acts as a S-nitroso-glutathione reductase by catalyzing the NADPH-dependent reduction of S-nitrosoglutathione. Displays no reductase activity towards retinoids. The sequence is that of Aldo-keto reductase family 1 member A1 (AKR1A1) from Gallus gallus (Chicken).